A 771-amino-acid chain; its full sequence is Topoisomerase 1-associated factor 2 (771 aa).

Disordered stretches follow at residues 48-69 (NSIN…SIQS), 271-330 (EGVV…ISFD), and 346-367 (SDMH…KSSL). A compositionally biased stretch (low complexity) spans 51-69 (NNCSDPSPTSPSSQNSIQS). A compositionally biased stretch (polar residues) spans 275-294 (TQGSDNNKENIPSSTQQQKN). The span at 295–307 (DGAKRAESKDLDL) shows a compositional bias: basic and acidic residues. Residues 346-359 (SDMHIQYSNPSSGA) are compositionally biased toward polar residues. S397 bears the Phosphoserine mark. T405 carries the post-translational modification Phosphothreonine. Residues 633-771 (NSKDKVEATS…KYVESDEDDQ (139 aa)) are disordered. Polar residues predominate over residues 640 to 652 (ATSNSTAQEQEQV). Over residues 690-709 (SHSSPSSSSSMSLESSLDSS) the composition is skewed to low complexity.

The protein to yeast YJL076w. Interacts with HPR1.

The protein resides in the nucleus. The sequence is that of Topoisomerase 1-associated factor 2 (TOF2) from Saccharomyces cerevisiae (strain ATCC 204508 / S288c) (Baker's yeast).